The chain runs to 20 residues: Pregnancy-associated glycoprotein 61C (20 aa).

The protein belongs to the peptidase A1 family. N-glycosylated. In terms of tissue distribution, expressed in chorionic epithelium (trophectoderm).

The protein resides in the secreted. It localises to the extracellular space. This is Pregnancy-associated glycoprotein 61C from Bubalus bubalis (Domestic water buffalo).